A 459-amino-acid polypeptide reads, in one-letter code: tRNA modification GTPase MnmE (459 aa).

Residues Arg-22, Glu-85, and Arg-124 each coordinate (6S)-5-formyl-5,6,7,8-tetrahydrofolate. A TrmE-type G domain is found at 221–380; that stretch reads GLSTVIVGKP…LEIQIRDLFF (160 aa). K(+) is bound at residue Asn-231. Residues 231–236, 250–256, and 275–278 contribute to the GTP site; these read NVGKSS, TEVAGTT, and DTAG. Ser-235 provides a ligand contact to Mg(2+). 3 residues coordinate K(+): Thr-250, Val-252, and Thr-255. Thr-256 is a Mg(2+) binding site. Lys-459 contributes to the (6S)-5-formyl-5,6,7,8-tetrahydrofolate binding site.

Belongs to the TRAFAC class TrmE-Era-EngA-EngB-Septin-like GTPase superfamily. TrmE GTPase family. Homodimer. Heterotetramer of two MnmE and two MnmG subunits. Requires K(+) as cofactor.

It localises to the cytoplasm. Functionally, exhibits a very high intrinsic GTPase hydrolysis rate. Involved in the addition of a carboxymethylaminomethyl (cmnm) group at the wobble position (U34) of certain tRNAs, forming tRNA-cmnm(5)s(2)U34. The sequence is that of tRNA modification GTPase MnmE from Staphylococcus aureus (strain MSSA476).